The sequence spans 293 residues: Shikimate dehydrogenase (NADP(+)) (293 aa).

Shikimate-binding positions include Ser26–Ser28 and Thr73. The active-site Proton acceptor is the Lys77. Glu89 provides a ligand contact to NADP(+). Shikimate-binding residues include Asn98 and Asp113. NADP(+)-binding positions include Gly137–Ala141, Asn161–Arg166, and Ile231. Tyr233 is a shikimate binding site. Gly254 lines the NADP(+) pocket.

This sequence belongs to the shikimate dehydrogenase family. In terms of assembly, homodimer.

It catalyses the reaction shikimate + NADP(+) = 3-dehydroshikimate + NADPH + H(+). It participates in metabolic intermediate biosynthesis; chorismate biosynthesis; chorismate from D-erythrose 4-phosphate and phosphoenolpyruvate: step 4/7. Involved in the biosynthesis of the chorismate, which leads to the biosynthesis of aromatic amino acids. Catalyzes the reversible NADPH linked reduction of 3-dehydroshikimate (DHSA) to yield shikimate (SA). This is Shikimate dehydrogenase (NADP(+)) from Bartonella quintana (strain Toulouse) (Rochalimaea quintana).